The sequence spans 126 residues: Large-conductance mechanosensitive channel (126 aa).

Helical transmembrane passes span 14-34 (VIDLAVGVVIGTAFSAVVNSL) and 66-86 (FITTIVNFLIISAALYFLVVV).

Belongs to the MscL family. Homopentamer.

It localises to the cell membrane. Its function is as follows. Channel that opens in response to stretch forces in the membrane lipid bilayer. May participate in the regulation of osmotic pressure changes within the cell. The protein is Large-conductance mechanosensitive channel of Roseiflexus sp. (strain RS-1).